The chain runs to 270 residues: Tryptophan synthase alpha chain (270 aa).

Residues E50 and D61 each act as proton acceptor in the active site.

This sequence belongs to the TrpA family. As to quaternary structure, tetramer of two alpha and two beta chains.

It catalyses the reaction (1S,2R)-1-C-(indol-3-yl)glycerol 3-phosphate + L-serine = D-glyceraldehyde 3-phosphate + L-tryptophan + H2O. Its pathway is amino-acid biosynthesis; L-tryptophan biosynthesis; L-tryptophan from chorismate: step 5/5. Functionally, the alpha subunit is responsible for the aldol cleavage of indoleglycerol phosphate to indole and glyceraldehyde 3-phosphate. This is Tryptophan synthase alpha chain from Chlorobium luteolum (strain DSM 273 / BCRC 81028 / 2530) (Pelodictyon luteolum).